Consider the following 1243-residue polypeptide: Protein MMS22-like (1243 aa).

This sequence belongs to the MMS22 family. MMS22L subfamily. In terms of assembly, component of the MMS22L-TONSL complex, a complex at least composed of MMS22L and TONSL/NFKBIL2. Interacts with RAD51; interaction is direct. In terms of processing, degraded by the ubiquitin-proteasome system upon replication stress.

The protein localises to the nucleus. The protein resides in the chromosome. Its function is as follows. Component of the MMS22L-TONSL complex, a complex that promotes homologous recombination-mediated repair of double-strand breaks (DSBs) at stalled or collapsed replication forks. The MMS22L-TONSL complex is required to maintain genome integrity during DNA replication. It mediates the assembly of RAD51 filaments on single-stranded DNA (ssDNA): the MMS22L-TONSL complex is recruited to DSBs following histone replacement by histone chaperones and eviction of the replication protein A complex (RPA/RP-A) from DSBs. Following recruitment to DSBs, the TONSL-MMS22L complex promotes recruitment of RAD51 filaments and subsequent homologous recombination. Within the complex, MMS22L acts by binding ssDNA. This chain is Protein MMS22-like, found in Homo sapiens (Human).